The sequence spans 1323 residues: DNA-directed RNA polymerase subunit beta' (1323 aa).

The Zn(2+) site is built by C60, C62, C75, and C78. D535, D537, and D539 together coordinate Mg(2+). 4 residues coordinate Zn(2+): C894, C977, C984, and C987.

This sequence belongs to the RNA polymerase beta' chain family. As to quaternary structure, the RNAP catalytic core consists of 2 alpha, 1 beta, 1 beta' and 1 omega subunit. When a sigma factor is associated with the core the holoenzyme is formed, which can initiate transcription. Mg(2+) is required as a cofactor. Requires Zn(2+) as cofactor.

It carries out the reaction RNA(n) + a ribonucleoside 5'-triphosphate = RNA(n+1) + diphosphate. Its function is as follows. DNA-dependent RNA polymerase catalyzes the transcription of DNA into RNA using the four ribonucleoside triphosphates as substrates. This Corynebacterium urealyticum (strain ATCC 43042 / DSM 7109) protein is DNA-directed RNA polymerase subunit beta'.